The following is a 307-amino-acid chain: Ribonuclease Z (307 aa).

Histidine 63, histidine 65, aspartate 67, histidine 68, histidine 141, aspartate 212, and histidine 270 together coordinate Zn(2+). The Proton acceptor role is filled by aspartate 67.

Belongs to the RNase Z family. Homodimer. It depends on Zn(2+) as a cofactor.

The enzyme catalyses Endonucleolytic cleavage of RNA, removing extra 3' nucleotides from tRNA precursor, generating 3' termini of tRNAs. A 3'-hydroxy group is left at the tRNA terminus and a 5'-phosphoryl group is left at the trailer molecule.. Its function is as follows. Zinc phosphodiesterase, which displays some tRNA 3'-processing endonuclease activity. Probably involved in tRNA maturation, by removing a 3'-trailer from precursor tRNA. The chain is Ribonuclease Z from Bacillus cereus (strain B4264).